The primary structure comprises 142 residues: Cytochrome b5-related protein (142 aa).

The region spanning 16 to 100 (PTYRNSAPVT…IAKYKVRDAY (85 aa)) is the Cytochrome b5 heme-binding domain. Residues His-59 and His-82 each coordinate heme.

It belongs to the cytochrome b5 family.

May play a role in muscle cell metabolism. This is Cytochrome b5-related protein (Cyt-b5-r) from Drosophila virilis (Fruit fly).